The sequence spans 306 residues: Protein farnesyltransferase/geranylgeranyltransferase type-1 subunit alpha (306 aa).

PFTA repeat units follow at residues 48–82 (YSERALHITELGINELASHYTIWIYRFNILKNLPN), 84–118 (NLYDELDWCEEIALDNEKNYQIWNYRQLIIGQIME), 125–159 (DPYREFPILEAMLSSDPKNHHVWSYRKWLVDTFDL), 161–195 (NDAKELSFVDKVIDTDLKNNSAWSHRFFLLFSKKH), and 201–235 (TIDEELNYVKDKIVKCPQNPSTWNYLLGIHERFDR).

The protein belongs to the protein prenyltransferase subunit alpha family. As to quaternary structure, heterodimer of an alpha and a beta subunit. The cofactor is Mg(2+).

The catalysed reaction is L-cysteinyl-[protein] + (2E,6E)-farnesyl diphosphate = S-(2E,6E)-farnesyl-L-cysteinyl-[protein] + diphosphate. It carries out the reaction geranylgeranyl diphosphate + L-cysteinyl-[protein] = S-geranylgeranyl-L-cysteinyl-[protein] + diphosphate. Functionally, essential subunit of both the farnesyltransferase and the geranylgeranyltransferase complex. Contributes to the transfer of a farnesyl or geranylgeranyl moiety from farnesyl or geranylgeranyl diphosphate to a cysteine at the fourth position from the C-terminus of several proteins having the C-terminal sequence Cys-aliphatic-aliphatic-X. This Candida albicans (Yeast) protein is Protein farnesyltransferase/geranylgeranyltransferase type-1 subunit alpha (RAM2).